Here is a 592-residue protein sequence, read N- to C-terminus: Catabolite repression protein creC (592 aa).

The disordered stretch occupies residues 119–140 (NSALAAAPVKDPSKKRKPKNNI). 4 WD repeats span residues 248–288 (INSS…ALFI), 327–368 (LANQ…DVFR), 369–408 (SYYG…IIAR), and 411–455 (GHDS…LHRP). Disordered regions lie at residues 459–513 (HQTS…HPVE) and 556–592 (WDRP…MGSL). 2 stretches are compositionally biased toward polar residues: residues 484-499 (SSGN…TAAD) and 564-576 (SDNY…SETL). One copy of the WD 5 repeat lies at 529–566 (VGEDPICWLGFQEDTIMTSSLEGHIRTWDRPRENISDN).

It belongs to the WD repeat creC family. In terms of assembly, interacts with creB.

Functionally, component of the regulatory network controlling carbon source utilization through ubiquitination and deubiquitination involving creA, creB, creC, creD and acrB. Required to prevent the proteolysis of the CreB deubiquitinating enzyme in the absence of carbon catabolite repression. CreB deubiquitinating enzyme stabilized in a complex with the CreC leads to the expression of genes such as those in the proline and quinate pathways. The protein is Catabolite repression protein creC (creC) of Emericella nidulans (strain FGSC A4 / ATCC 38163 / CBS 112.46 / NRRL 194 / M139) (Aspergillus nidulans).